Consider the following 498-residue polypeptide: Nucleobase transporter PlAzg2 (498 aa).

13 helical membrane-spanning segments follow: residues 88-108 (LLAG…NSSI), 118-138 (AGII…GLWG), 142-162 (LVIV…VQGM), 169-189 (ALAA…TSLV), 203-223 (AISV…GGVI), 236-256 (FADP…ILYI), 259-279 (VPGN…LFKA), 312-332 (TLVI…VGLI), 357-377 (ILSG…AAGI), 388-408 (IATG…TLVP), 412-432 (VAPI…HISF), 443-463 (FIIA…IGFI), and 478-498 (VKPL…LQTM).

Belongs to the nucleobase:cation symporter-2 (NCS2) (TC 2.A.40) family. Azg-like subfamily.

It is found in the cell membrane. With respect to regulation, inhibited by the proton gradient disruptor carbonyl cyanide m-chlorophenylhydrazone (CCCP), but not by the sodium gradient disruptor ouabain. Transports adenine, guanine, hypoxanthine, xanthine, cytosine and uracil. Transport is probably proton-dependent. The polypeptide is Nucleobase transporter PlAzg2 (Paenibacillus larvae subsp. larvae (strain NRRL B-3650 / LMG 16245)).